Reading from the N-terminus, the 625-residue chain is MACYIYQLPSWVLDDLCRNMDALSEWDWMEFASYVITDLTQLRKIKSMERVQGVSITRELLWWWGMRQATVQQLVDLLCRLELYRAAQIILNWKPAPEIRCPIPAFPDSVKPEKPLAASVRKAEDEQEEGQPVRMATFPGPGSSPARAHQPAFLQPPEEDAPHSLRSDLPTSSDSKDFSTSIPKQEKLLSLAGDSLFWSEADVVQATDDFNQNRKISQGTFADVYRGHRHGKPFVFKKLRETACSSPGSIERFFQAELQICLRCCHPNVLPVLGFCAARQFHSFIYPYMANGSLQDRLQGQGGSDPLPWPQRVSICSGLLCAVEYLHGLEIIHSNVKSSNVLLDQNLTPKLAHPMAHLCPVNKRSKYTMMKTHLLRTSAAYLPEDFIRVGQLTKRVDIFSCGIVLAEVLTGIPAMDNNRSPVYLKDLLLSDIPSSTASLCSRKTGVENVMAKEICQKYLEKGAGRLPEDCAEALATAACLCLRRRNTSLQEVCGSVAAVEERLRGRETLLPWSGLSEGTGSSSNTPEETDDVDNSSLDASSSMSVAPWAGAATPLLPTENGEGRLRVIVGREADSSSEACVGLEPPQDVTETSWQIEINEAKRKLMENILLYKEEKVDSIELFGP.

Positions 13 to 94 (LDDLCRNMDA…RAAQIILNWK (82 aa)) constitute a Death domain. The interval 111–181 (KPEKPLAASV…SSDSKDFSTS (71 aa)) is disordered. Residue serine 144 is modified to Phosphoserine. Over residues 169-181 (LPTSSDSKDFSTS) the composition is skewed to polar residues. Residues 210 to 489 (FNQNRKISQG…LCLRRRNTSL (280 aa)) form the Protein kinase domain. Residues 216 to 224 (ISQGTFADV), lysine 237, and 337 to 340 (KSSN) contribute to the ATP site. Residues 510–540 (LPWSGLSEGTGSSSNTPEETDDVDNSSLDAS) are disordered. Polar residues predominate over residues 516 to 526 (SEGTGSSSNTP).

It belongs to the protein kinase superfamily. TKL Ser/Thr protein kinase family. Pelle subfamily. In terms of assembly, interacts with MYD88. IL-1 stimulation leads to the formation of a signaling complex which dissociates from the IL-1 receptor following the binding of PELI1. As to expression, expressed in spleen, thymus, prostate, lung, liver, skeletal muscle, kidney, pancreas and peripheral blood leukocytes.

Its function is as follows. Binds to the IL-1 type I receptor following IL-1 engagement, triggering intracellular signaling cascades leading to transcriptional up-regulation and mRNA stabilization. This Homo sapiens (Human) protein is Interleukin-1 receptor-associated kinase-like 2 (IRAK2).